The primary structure comprises 578 residues: MVSHKCVEEFGYASYLVPSNARAPRSARKRRSIEKRISKEDDNMCAIDLLATVAGHLSFESGSSLMSIDKLIEDHRVKEEFPEEEKPLMPVALSPYRGSLSPCGFSSVINGKVENEVDGFSYSGGSDACQVGNFSQDVKPDIDGDAVVLDARPNVVVSLGSSSRTEVPSIGNCVSHGVRDDVNLFSRDDDENFSKYIHPRVTKHSPRTVPRIGDRRIRKILASRHWKGGSRHSDTKPWRNYYLHQQRSYPIKKRKNFDHISDSVTDDYRMRTKMHRGSRKGQGASFVASDSHVKLRIKSFRVPELFIEIPETATVGSLKRMVMEAVSTLLSDGHRVGLMVQGKKVRDDNKTLHQTGISQDNSHLDSLDFSLEPSSEMPQLLTSHPLGHACEELLPVCQATKIDNVLESDHHDSALFPSDSLGNNNVTEDSKAMISVALNELSSQSQPPSRKSRRSEQQQQQAAQRRIRRPFSVAEVEALVQAVEKLGTGRWRDVKLCAFEDADHRTYVDLKDKWKTLVHTAKISPQQRRGEPVPQELLNRVLNAHGYWTQQQMQQLQQNVNKLEQETQSQTTEGLLLL.

The Ubiquitin-like domain occupies 293–372; the sequence is VKLRIKSFRV…HLDSLDFSLE (80 aa). Positions 440-467 are disordered; sequence ELSSQSQPPSRKSRRSEQQQQQAAQRRI. The HTH myb-type domain occupies 463 to 522; the sequence is AQRRIRRPFSVAEVEALVQAVEKLGTGRWRDVKLCAFEDADHRTYVDLKDKWKTLVHTAK. 3 interaction with DNA regions span residues 465-469, 511-515, and 522-529; these read RRIRR, KDKWK, and KISPQQRR. The H-T-H motif DNA-binding region spans 491 to 518; the sequence is WRDVKLCAFEDADHRTYVDLKDKWKTLV.

In terms of assembly, homodimer and heterodimer with TRP2 and TRP3. Interacts with KU70. In terms of tissue distribution, expressed ubiquitously. Highest expression in flowers and leaves.

The protein localises to the nucleus. Its function is as follows. Binds specifically to the plant telomeric double-stranded DNA sequences 5'-GGTTTAG-3'. At least 4 repeats of telomeric sequences are required for binding. Induces DNA bending. The protein is Telomere repeat-binding protein 1 (TRP1) of Arabidopsis thaliana (Mouse-ear cress).